Here is a 107-residue protein sequence, read N- to C-terminus: Protein HitA (107 aa).

Residues 5–107 (IFCKIAAKEI…LHIHIMGTPV (103 aa)) form the HIT domain. Positions 97–101 (HLHIH) match the Histidine triad motif motif.

In Neisseria gonorrhoeae, this protein is Protein HitA (hitA).